Here is a 206-residue protein sequence, read N- to C-terminus: Crossover junction endodeoxyribonuclease RuvC (206 aa).

Residues aspartate 7, glutamate 67, and aspartate 138 contribute to the active site. Positions 7, 67, and 138 each coordinate Mg(2+).

The protein belongs to the RuvC family. Homodimer which binds Holliday junction (HJ) DNA. The HJ becomes 2-fold symmetrical on binding to RuvC with unstacked arms; it has a different conformation from HJ DNA in complex with RuvA. In the full resolvosome a probable DNA-RuvA(4)-RuvB(12)-RuvC(2) complex forms which resolves the HJ. Mg(2+) is required as a cofactor.

It localises to the cytoplasm. The enzyme catalyses Endonucleolytic cleavage at a junction such as a reciprocal single-stranded crossover between two homologous DNA duplexes (Holliday junction).. Functionally, the RuvA-RuvB-RuvC complex processes Holliday junction (HJ) DNA during genetic recombination and DNA repair. Endonuclease that resolves HJ intermediates. Cleaves cruciform DNA by making single-stranded nicks across the HJ at symmetrical positions within the homologous arms, yielding a 5'-phosphate and a 3'-hydroxyl group; requires a central core of homology in the junction. The consensus cleavage sequence is 5'-(A/T)TT(C/G)-3'. Cleavage occurs on the 3'-side of the TT dinucleotide at the point of strand exchange. HJ branch migration catalyzed by RuvA-RuvB allows RuvC to scan DNA until it finds its consensus sequence, where it cleaves and resolves the cruciform DNA. The protein is Crossover junction endodeoxyribonuclease RuvC of Anaeromyxobacter sp. (strain Fw109-5).